Here is a 299-residue protein sequence, read N- to C-terminus: Ribosomal RNA small subunit methyltransferase H (299 aa).

S-adenosyl-L-methionine contacts are provided by residues 35 to 37, Asp-54, Tyr-80, Asp-101, and Gln-108; that span reads GGH.

This sequence belongs to the methyltransferase superfamily. RsmH family.

It localises to the cytoplasm. The catalysed reaction is cytidine(1402) in 16S rRNA + S-adenosyl-L-methionine = N(4)-methylcytidine(1402) in 16S rRNA + S-adenosyl-L-homocysteine + H(+). Specifically methylates the N4 position of cytidine in position 1402 (C1402) of 16S rRNA. The polypeptide is Ribosomal RNA small subunit methyltransferase H (Coprothermobacter proteolyticus (strain ATCC 35245 / DSM 5265 / OCM 4 / BT)).